Consider the following 100-residue polypeptide: MKMSRLCLSVALLVLLGTLAASTPGCDTSNQAKAQRPDFCLEPPYTGPCKARIIRYFYNAKAGLCQTFVYGGCRAKRNNFKSAEDCMRTCGGAIGPWENL.

The N-terminal stretch at 1–21 is a signal peptide; the sequence is MKMSRLCLSVALLVLLGTLAA. A propeptide spanning residues 22 to 35 is cleaved from the precursor; sequence STPGCDTSNQAKAQ. The 51-residue stretch at 40–90 folds into the BPTI/Kunitz inhibitor domain; the sequence is CLEPPYTGPCKARIIRYFYNAKAGLCQTFVYGGCRAKRNNFKSAEDCMRTC. Intrachain disulfides connect Cys40–Cys90, Cys49–Cys73, and Cys65–Cys86. The propeptide occupies 94–100; the sequence is IGPWENL.

It is found in the secreted. Inhibits trypsin, kallikrein, chymotrypsin, and plasmin. The protein is Pancreatic trypsin inhibitor of Bos taurus (Bovine).